Consider the following 241-residue polypeptide: Uridylate kinase (241 aa).

An ATP-binding site is contributed by 12–15; that stretch reads KLSG. The involved in allosteric activation by GTP stretch occupies residues 20 to 25; it reads GDKGQG. UMP is bound at residue G54. ATP contacts are provided by G55 and R59. UMP-binding positions include D74 and 135-142; that span reads TGSPYFST. Residues N163, Y169, and D172 each coordinate ATP.

Belongs to the UMP kinase family. Homohexamer.

The protein localises to the cytoplasm. It catalyses the reaction UMP + ATP = UDP + ADP. It participates in pyrimidine metabolism; CTP biosynthesis via de novo pathway; UDP from UMP (UMPK route): step 1/1. Its activity is regulated as follows. Allosterically activated by GTP. Inhibited by UTP. Catalyzes the reversible phosphorylation of UMP to UDP. This chain is Uridylate kinase, found in Leuconostoc mesenteroides subsp. mesenteroides (strain ATCC 8293 / DSM 20343 / BCRC 11652 / CCM 1803 / JCM 6124 / NCDO 523 / NBRC 100496 / NCIMB 8023 / NCTC 12954 / NRRL B-1118 / 37Y).